Consider the following 111-residue polypeptide: DNA-directed RNA polymerase subunit Rpo11 (111 aa).

The protein belongs to the archaeal Rpo11/eukaryotic RPB11/RPC19 RNA polymerase subunit family. In terms of assembly, part of the RNA polymerase complex.

The protein resides in the cytoplasm. The catalysed reaction is RNA(n) + a ribonucleoside 5'-triphosphate = RNA(n+1) + diphosphate. In terms of biological role, DNA-dependent RNA polymerase (RNAP) catalyzes the transcription of DNA into RNA using the four ribonucleoside triphosphates as substrates. The sequence is that of DNA-directed RNA polymerase subunit Rpo11 from Thermoplasma volcanium (strain ATCC 51530 / DSM 4299 / JCM 9571 / NBRC 15438 / GSS1).